Reading from the N-terminus, the 429-residue chain is Adenylosuccinate synthetase (429 aa).

GTP-binding positions include 12-18 and 40-42; these read GDEGKGK and GHT. The Proton acceptor role is filled by aspartate 13. Residues aspartate 13 and glycine 40 each coordinate Mg(2+). Residues 13 to 16, 38 to 41, threonine 129, arginine 143, glutamine 224, threonine 239, and arginine 303 contribute to the IMP site; these read DEGK and NAGH. Histidine 41 (proton donor) is an active-site residue. 299–305 serves as a coordination point for substrate; that stretch reads VTTGRAR. Residues arginine 305, 331-333, and 413-415 each bind GTP; these read KLD and GVG.

It belongs to the adenylosuccinate synthetase family. In terms of assembly, homodimer. Mg(2+) is required as a cofactor.

Its subcellular location is the cytoplasm. It catalyses the reaction IMP + L-aspartate + GTP = N(6)-(1,2-dicarboxyethyl)-AMP + GDP + phosphate + 2 H(+). It functions in the pathway purine metabolism; AMP biosynthesis via de novo pathway; AMP from IMP: step 1/2. Plays an important role in the de novo pathway of purine nucleotide biosynthesis. Catalyzes the first committed step in the biosynthesis of AMP from IMP. The protein is Adenylosuccinate synthetase of Rhodococcus jostii (strain RHA1).